A 288-amino-acid chain; its full sequence is uncharacterized protein (288 aa).

The 59-residue stretch at 1–59 (MDKLNAISIFCKVIETQSFTLAAKQQNISVAMASKLVSQLEEHLKTRLLQRTTRKIMPT) folds into the HTH lysR-type domain. The segment at residues 19–38 (FTLAAKQQNISVAMASKLVS) is a DNA-binding region (H-T-H motif).

The protein belongs to the LysR transcriptional regulatory family.

This is an uncharacterized protein from Haemophilus influenzae (strain ATCC 51907 / DSM 11121 / KW20 / Rd).